A 201-amino-acid polypeptide reads, in one-letter code: Protein lin-7 homolog B (201 aa).

The short motif at 1–13 (MAALVEPLGLERE) is the Kinase interacting site element. The region spanning 10-65 (LEREVSRAVELLERLQRSGELPPQKLQALQRVLQSRFCSAIREVYEQLYDTLDITG) is the L27 domain. The region spanning 93–175 (VVELPKTDEG…SVKLVVRYTP (83 aa)) is the PDZ domain.

The protein belongs to the lin-7 family. As to quaternary structure, forms a complex with CASK and CASKIN1. Component of the brain-specific heterotrimeric complex (LIN-10-LIN-2-LIN-7 complex) composed of at least APBA1, CASK, and LIN7, which associates with the motor protein KIF17 to transport vesicles along microtubules. Forms a heterotrimeric complex composed of MMP5, LIN7B and PATJ; the N-terminal L27 domain of PALS1 interacts with the L27 domain of PATJ and the C-terminal L27 domain of PALS1 interacts with the L27 domain of LIN7B. Forms a heterotrimeric complex with DLG1 and CASK via their L27 domains. Interacts with DLG4 and GRIN2B as well as CDH1 and CTNNB1, the channels KCNJ12/Kir2.2, KCNJ4/Kir2.3 and probably KCNJ2/Kir2.1 and SLC6A12/BGT-1 via its PDZ domain. The association of LIN7A with cadherin and beta-catenin is calcium-dependent, occurs at synaptic junctions and requires the actin cytoskeleton. Interacts with EGFR, ERBB2, ERBB3 and ERBB4 with both PDZ and KID domains. Interacts with ASIC3. Interacts with TOPK. Interacts with RTKN. Associates with KIF17 via APBA1. Interacts with APBA1. Interacts with MPP7. Interacts with DLG2. Interacts with DLG3.

The protein resides in the cell membrane. The protein localises to the basolateral cell membrane. Its subcellular location is the cell junction. It is found in the postsynaptic density membrane. It localises to the tight junction. Plays a role in establishing and maintaining the asymmetric distribution of channels and receptors at the plasma membrane of polarized cells. Forms membrane-associated multiprotein complexes that may regulate delivery and recycling of proteins to the correct membrane domains. The tripartite complex composed of LIN7 (LIN7A, LIN7B or LIN7C), CASK and APBA1 associates with the motor protein KIF17 to transport vesicles containing N-methyl-D-aspartate (NMDA) receptor subunit NR2B along microtubules. This complex may have the potential to couple synaptic vesicle exocytosis to cell adhesion in brain. Ensures the proper localization of GRIN2B (subunit 2B of the NMDA receptor) to neuronal postsynaptic density and may function in localizing synaptic vesicles at synapses where it is recruited by beta-catenin and cadherin. Required to localize Kir2 channels, GABA transporter (SLC6A12) and EGFR/ERBB1, ERBB2, ERBB3 and ERBB4 to the basolateral membrane of epithelial cells. May increase the amplitude of ASIC3 acid-evoked currents by stabilizing the channel at the cell surface. This chain is Protein lin-7 homolog B (LIN7B), found in Bos taurus (Bovine).